The primary structure comprises 199 residues: Photosystem I reaction center subunit XI (199 aa).

The next 2 helical transmembrane spans lie at 108–128 and 165–185; these read LTAG…LFVL and FWLG…TLHL.

The protein belongs to the PsaL family.

It is found in the cellular thylakoid membrane. The sequence is that of Photosystem I reaction center subunit XI from Prochlorococcus marinus (strain MIT 9301).